The chain runs to 278 residues: 4-deoxy-L-threo-5-hexosulose-uronate ketol-isomerase (278 aa).

H196, H198, E203, and H245 together coordinate Zn(2+).

It belongs to the KduI family. In terms of assembly, homohexamer. Requires Zn(2+) as cofactor.

The enzyme catalyses 5-dehydro-4-deoxy-D-glucuronate = 3-deoxy-D-glycero-2,5-hexodiulosonate. It participates in glycan metabolism; pectin degradation; 2-dehydro-3-deoxy-D-gluconate from pectin: step 4/5. Functionally, catalyzes the isomerization of 5-dehydro-4-deoxy-D-glucuronate to 3-deoxy-D-glycero-2,5-hexodiulosonate. This Escherichia coli (strain K12 / MC4100 / BW2952) protein is 4-deoxy-L-threo-5-hexosulose-uronate ketol-isomerase.